We begin with the raw amino-acid sequence, 252 residues long: MGSMGGSRHLKAINAPRYWPILRKEYRWVVKSSPGPHPISRSLPLLILVRDMLGYAKTGKEARRLIAEGYFKIDGRVRRDYKFPVGVMDVIEIVGVNKYYRVIPVPTKVLGLIEISREEASFKLCRIENKTTVKNGHIQLNLHDGRNVLIRVNDPRNPVEDTYDTLGVLKLSIPVQQILDYVPLKEGVIAIVSGGRNVGRVGKIVSIHKGMRRYRSIVTLEDKQGNKFQTSLDYIFPIGVEKPLIKLPEGAW.

The S4 RNA-binding domain maps to leucine 43–proline 106.

The protein belongs to the eukaryotic ribosomal protein eS4 family.

This Desulfurococcus amylolyticus (strain DSM 18924 / JCM 16383 / VKM B-2413 / 1221n) (Desulfurococcus kamchatkensis) protein is Small ribosomal subunit protein eS4.